A 137-amino-acid chain; its full sequence is Large ribosomal subunit protein uL16 (137 aa).

This sequence belongs to the universal ribosomal protein uL16 family. In terms of assembly, part of the 50S ribosomal subunit.

In terms of biological role, binds 23S rRNA and is also seen to make contacts with the A and possibly P site tRNAs. The sequence is that of Large ribosomal subunit protein uL16 from Coxiella burnetii (strain RSA 331 / Henzerling II).